The chain runs to 189 residues: GTP cyclohydrolase 1 (189 aa).

Residues cysteine 76, histidine 79, and cysteine 149 each coordinate Zn(2+).

It belongs to the GTP cyclohydrolase I family. In terms of assembly, toroid-shaped homodecamer, composed of two pentamers of five dimers.

The catalysed reaction is GTP + H2O = 7,8-dihydroneopterin 3'-triphosphate + formate + H(+). It participates in cofactor biosynthesis; 7,8-dihydroneopterin triphosphate biosynthesis; 7,8-dihydroneopterin triphosphate from GTP: step 1/1. In Dehalococcoides mccartyi (strain ATCC BAA-2266 / KCTC 15142 / 195) (Dehalococcoides ethenogenes (strain 195)), this protein is GTP cyclohydrolase 1.